Here is a 447-residue protein sequence, read N- to C-terminus: Alpha-1,6-mannosyl-glycoprotein 2-beta-N-acetylglucosaminyltransferase (447 aa).

Topologically, residues 1 to 9 (MRFRIYKRK) are cytoplasmic. Residues 10-29 (VLILTLVVAACGFVLWSSNG) form a helical; Signal-anchor for type II membrane protein membrane-spanning segment. Topologically, residues 30–447 (RQRKNEALAP…ELCKSYRRLQ (418 aa)) are lumenal. Asn69 and Asn86 each carry an N-linked (GlcNAc...) asparagine glycan. Substrate-binding positions include 123-127 (QVHNR) and Asp154. A disulfide bridge links Cys196 with Cys210. 229–233 (QTKHH) contributes to the substrate binding site. A Mn(2+)-binding site is contributed by Asp261. Cys283 and Cys286 are disulfide-bonded. Residue Arg298 participates in substrate binding. 3 cysteine pairs are disulfide-bonded: Cys334–Cys357, Cys339–Cys440, and Cys378–Cys386. Mn(2+) is bound at residue His374.

It belongs to the glycosyltransferase 16 (GT16) protein family. Homodimer. The cofactor is Mn(2+).

The protein resides in the golgi apparatus membrane. It carries out the reaction an N(4)-{beta-D-GlcNAc-(1-&gt;2)-alpha-D-Man-(1-&gt;3)-[alpha-D-Man-(1-&gt;6)]-beta-D-Man-(1-&gt;4)-beta-D-GlcNAc-(1-&gt;4)-beta-D-GlcNAc}-L-asparaginyl-[protein] + UDP-N-acetyl-alpha-D-glucosamine = N(4)-{beta-D-GlcNAc-(1-&gt;2)-alpha-D-Man-(1-&gt;3)-[beta-D-GlcNAc-(1-&gt;2)-alpha-D-Man-(1-&gt;6)]-beta-D-Man-(1-&gt;4)-beta-D-GlcNAc-(1-&gt;4)-beta-D-GlcNAc}-L-asparaginyl-[protein] + UDP + H(+). It participates in protein modification; protein glycosylation. Plays an essential role in protein N-glycosylation. Catalyzes the transfer of N-acetylglucosamine (GlcNAc) onto the free terminal mannose moiety in the core structure of the nascent N-linked glycan chain, giving rise to the second branch in complex glycans. This chain is Alpha-1,6-mannosyl-glycoprotein 2-beta-N-acetylglucosaminyltransferase (MGAT2), found in Homo sapiens (Human).